The following is a 742-amino-acid chain: Alginate lyase (742 aa).

An N-terminal signal peptide occupies residues 1 to 26; the sequence is MRLQPLFVSLALAAPCALLPTASLSA. Residues Arg143, 153-156, Gln204, His208, and 263-266 contribute to the substrate site; these read QVLN and YYQR. The active-site Proton donor is the Tyr264. The active-site Proton acceptor is His418. Zn(2+) is bound by residues His420 and Asp438. Arg443 contacts substrate. A Zn(2+)-binding site is contributed by His469. Residue Glu669 coordinates substrate.

It belongs to the polysaccharide lyase 17 family. Homodimer. Zn(2+) is required as a cofactor.

It is found in the periplasm. The catalysed reaction is Cleavage of 4-deoxy-alpha-L-erythro-hex-4-enopyranuronoside oligosaccharides into 4-deoxy-alpha-L-erythro-hex-4-enopyranuronate monosaccharides.. Its function is as follows. Polysaccharide lyase that catalyzes the depolymerization of alginate via a beta-elimination mechanism, cleaving the beta-1,4 glycosidic bond between two adjacent sugar residues. Acts specifically on alginate and each of its block structures, with highest activity toward poly-beta-D-mannuronate (poly-ManA). Shows an exolytic mode of action, producing unsaturated monomers. Displays a very low activity against poly-beta-D-glucuronate (poly-GlcA), and is not active on poly-alpha-D-galacturonate, hyaluronan, heparin, heparan sulfate and chondroitin sulfate. The protein is Alginate lyase of Stenotrophomonas maltophilia (strain K279a).